A 734-amino-acid polypeptide reads, in one-letter code: MASRFPKFSQGLAQDPTTRRIWFGIATAHDFESHDDITEERLYQKIFASHFGQLAVIFLWTSGNLFHVAWQGNFEAWGKDPLHVRPIAHAIWDPHFGQPAVEAFTRGGASGPVNIAYSGVYQWWYTIGMRTNQDLYTGALFLLAVSAVALVAGWLHLQPKWKPSVSWFKNAESRLNHHLSGLFGVSSLAWTGHLVHVAIPESRGQHIGWDNFLTTPPHPQGLTPFFSGQWSVYAQDADSSGHLFGTTEGAGTAILTFLGGFHPQTQSLWLTDIAHHHLAIAVLFIVAGHMYRTNFGIGHSIREILDAHVPPAGRLGRGHQGLYDTINNSLHFQLGLALASLGVITSLVAQHMYSLPPYAFLAQDFTTQAALYTHHQYIAGFIMTGAFAHGAIFFIRDYNPEQNKSNVLARMLEHKEAIISHLSWASLFLGFHTLGLYVHNDVMLAFGTPEKQILIEPVFAQWIQSAHGKSLYGFDVLLSNAASPALSAGQSIWLPGWLDAINSGSNSLFLTIGPGDFLVHHAIALGLHTTTLILVKGALDARGSKLMPDKKEFGFSFPCDGPGRGGTCDISAWDAFYLAVFWMLNTIGWVTFYWHWKHLTLWQGNAAQFAESSTYLMGWLRDYLWLNSSQLINGYNPFGMNSLSVWAWMFLFGHLVWATGFMFLISWRGYWQELIETLAWAHERTPLANLVRWKDKPVALSIVQARLVGLAHFSVGYIFTYAAFLIASTSGKFG.

8 consecutive transmembrane segments (helical) span residues 46 to 69, 135 to 158, 175 to 199, 273 to 291, 330 to 353, 369 to 395, 417 to 439, and 517 to 535; these read IFASHFGQLAVIFLWTSGNLFHVA, LYTGALFLLAVSAVALVAGWLHLQ, LNHHLSGLFGVSSLAWTGHLVHVAI, IAHHHLAIAVLFIVAGHMY, LHFQLGLALASLGVITSLVAQHMY, AALYTHHQYIAGFIMTGAFAHGAIFFI, AIISHLSWASLFLGFHTLGLYVH, and FLVHHAIALGLHTTTLILV. Residues Cys-559 and Cys-568 each coordinate [4Fe-4S] cluster. Helical transmembrane passes span 575 to 596 and 643 to 665; these read AFYLAVFWMLNTIGWVTFYWHW and LSVWAWMFLFGHLVWATGFMFLI. Positions 654, 662, and 670 each coordinate chlorophyll a. Trp-671 provides a ligand contact to phylloquinone. The helical transmembrane segment at 707–727 threads the bilayer; sequence LVGLAHFSVGYIFTYAAFLIA.

This sequence belongs to the PsaA/PsaB family. As to quaternary structure, the PsaA/B heterodimer binds the P700 chlorophyll special pair and subsequent electron acceptors. PSI consists of a core antenna complex that captures photons, and an electron transfer chain that converts photonic excitation into a charge separation. The eukaryotic PSI reaction center is composed of at least 11 subunits. It depends on P700 is a chlorophyll a/chlorophyll a' dimer, A0 is one or more chlorophyll a, A1 is one or both phylloquinones and FX is a shared 4Fe-4S iron-sulfur center. as a cofactor.

The protein resides in the plastid. Its subcellular location is the chloroplast thylakoid membrane. It catalyses the reaction reduced [plastocyanin] + hnu + oxidized [2Fe-2S]-[ferredoxin] = oxidized [plastocyanin] + reduced [2Fe-2S]-[ferredoxin]. Its function is as follows. PsaA and PsaB bind P700, the primary electron donor of photosystem I (PSI), as well as the electron acceptors A0, A1 and FX. PSI is a plastocyanin-ferredoxin oxidoreductase, converting photonic excitation into a charge separation, which transfers an electron from the donor P700 chlorophyll pair to the spectroscopically characterized acceptors A0, A1, FX, FA and FB in turn. Oxidized P700 is reduced on the lumenal side of the thylakoid membrane by plastocyanin. The chain is Photosystem I P700 chlorophyll a apoprotein A2 from Zygnema circumcarinatum (Green alga).